The following is a 416-amino-acid chain: Multifunctional CCA protein (416 aa).

Glycine 8 and arginine 11 together coordinate ATP. The CTP site is built by glycine 8 and arginine 11. 2 residues coordinate Mg(2+): aspartate 21 and aspartate 23. Arginine 91, arginine 137, and arginine 140 together coordinate ATP. Arginine 91, arginine 137, and arginine 140 together coordinate CTP. In terms of domain architecture, HD spans 228–329 (TGVHTLMVLA…VKIFDKADFW (102 aa)).

Belongs to the tRNA nucleotidyltransferase/poly(A) polymerase family. Bacterial CCA-adding enzyme type 1 subfamily. As to quaternary structure, monomer. Can also form homodimers and oligomers. The cofactor is Mg(2+). Ni(2+) is required as a cofactor.

The catalysed reaction is a tRNA precursor + 2 CTP + ATP = a tRNA with a 3' CCA end + 3 diphosphate. It catalyses the reaction a tRNA with a 3' CCA end + 2 CTP + ATP = a tRNA with a 3' CCACCA end + 3 diphosphate. Its function is as follows. Catalyzes the addition and repair of the essential 3'-terminal CCA sequence in tRNAs without using a nucleic acid template. Adds these three nucleotides in the order of C, C, and A to the tRNA nucleotide-73, using CTP and ATP as substrates and producing inorganic pyrophosphate. tRNA 3'-terminal CCA addition is required both for tRNA processing and repair. Also involved in tRNA surveillance by mediating tandem CCA addition to generate a CCACCA at the 3' terminus of unstable tRNAs. While stable tRNAs receive only 3'-terminal CCA, unstable tRNAs are marked with CCACCA and rapidly degraded. In Shewanella baltica (strain OS155 / ATCC BAA-1091), this protein is Multifunctional CCA protein.